The chain runs to 20 residues: Cytochrome c oxidase subunit 6A1, mitochondrial (20 aa).

Belongs to the cytochrome c oxidase subunit 6A family. Component of the cytochrome c oxidase (complex IV, CIV), a multisubunit enzyme composed of 14 subunits. The complex is composed of a catalytic core of 3 subunits MT-CO1, MT-CO2 and MT-CO3, encoded in the mitochondrial DNA, and 11 supernumerary subunits COX4I, COX5A, COX5B, COX6A, COX6B, COX6C, COX7A, COX7B, COX7C, COX8 and NDUFA4, which are encoded in the nuclear genome. The complex exists as a monomer or a dimer and forms supercomplexes (SCs) in the inner mitochondrial membrane with NADH-ubiquinone oxidoreductase (complex I, CI) and ubiquinol-cytochrome c oxidoreductase (cytochrome b-c1 complex, complex III, CIII), resulting in different assemblies (supercomplex SCI(1)III(2)IV(1) and megacomplex MCI(2)III(2)IV(2)). Liver specific isoform.

The protein localises to the mitochondrion inner membrane. The protein operates within energy metabolism; oxidative phosphorylation. Component of the cytochrome c oxidase, the last enzyme in the mitochondrial electron transport chain which drives oxidative phosphorylation. The respiratory chain contains 3 multisubunit complexes succinate dehydrogenase (complex II, CII), ubiquinol-cytochrome c oxidoreductase (cytochrome b-c1 complex, complex III, CIII) and cytochrome c oxidase (complex IV, CIV), that cooperate to transfer electrons derived from NADH and succinate to molecular oxygen, creating an electrochemical gradient over the inner membrane that drives transmembrane transport and the ATP synthase. Cytochrome c oxidase is the component of the respiratory chain that catalyzes the reduction of oxygen to water. Electrons originating from reduced cytochrome c in the intermembrane space (IMS) are transferred via the dinuclear copper A center (CU(A)) of subunit 2 and heme A of subunit 1 to the active site in subunit 1, a binuclear center (BNC) formed by heme A3 and copper B (CU(B)). The BNC reduces molecular oxygen to 2 water molecules unsing 4 electrons from cytochrome c in the IMS and 4 protons from the mitochondrial matrix. This is Cytochrome c oxidase subunit 6A1, mitochondrial (COX6A1) from Canis lupus familiaris (Dog).